Consider the following 389-residue polypeptide: Na(+)/H(+) antiporter NhaA (389 aa).

The next 10 membrane-spanning stretches (helical) occupy residues Ile-8–Trp-28, Ile-48–Ile-68, Met-91–Ile-111, Gly-119–Phe-139, Asn-173–Leu-193, Ala-214–Leu-234, Trp-262–Phe-282, Leu-288–Gly-308, Leu-327–Val-347, and Gly-361–Ile-381.

This sequence belongs to the NhaA Na(+)/H(+) (TC 2.A.33) antiporter family.

Its subcellular location is the cell membrane. The enzyme catalyses Na(+)(in) + 2 H(+)(out) = Na(+)(out) + 2 H(+)(in). Its function is as follows. Na(+)/H(+) antiporter that extrudes sodium in exchange for external protons. This chain is Na(+)/H(+) antiporter NhaA, found in Desulfitobacterium hafniense (strain DSM 10664 / DCB-2).